The following is a 217-amino-acid chain: 7-cyano-7-deazaguanine synthase (217 aa).

An ATP-binding site is contributed by 10–20 (FSGGQDSTTCL). Residues cysteine 185, cysteine 194, cysteine 197, and cysteine 200 each coordinate Zn(2+).

The protein belongs to the QueC family. Homodimer. Zn(2+) is required as a cofactor.

The enzyme catalyses 7-carboxy-7-deazaguanine + NH4(+) + ATP = 7-cyano-7-deazaguanine + ADP + phosphate + H2O + H(+). It participates in purine metabolism; 7-cyano-7-deazaguanine biosynthesis. Catalyzes the ATP-dependent conversion of 7-carboxy-7-deazaguanine (CDG) to 7-cyano-7-deazaguanine (preQ(0)). The polypeptide is 7-cyano-7-deazaguanine synthase (Streptococcus thermophilus (strain CNRZ 1066)).